Consider the following 770-residue polypeptide: Probable capsid and replication-associated protein (770 aa).

2 disordered regions span residues 645–682 and 697–717; these read QRMQ…QKES and WEDS…TQTV. A compositionally biased stretch (polar residues) spans 646-656; that stretch reads RMQQQPTTTDI. Residues 666-681 show a composition bias toward basic and acidic residues; that stretch reads RDTEVYHSSQEGEQKE. Positions 703-717 are enriched in low complexity; the sequence is EESGSQSSEEETQTV.

It belongs to the anelloviridae capsid protein family.

Its subcellular location is the virion. Its function is as follows. May self assemble to form an icosahedral capsid. Presumably essential to initiate and monitor viral genome replication by a rolling circle mechanism. This chain is Probable capsid and replication-associated protein, found in Homo sapiens (Human).